The following is a 258-amino-acid chain: Snake venom serine protease KN13 (258 aa).

A signal peptide spans 1–18 (MVLIRVLANLLILQLSYA). The propeptide occupies 19-24 (QRSSEL). Residues 25–249 (VIGGDECNIN…HLDWIQNIIA (225 aa)) form the Peptidase S1 domain. 6 disulfides stabilise this stretch: C31-C163, C50-C66, C98-C256, C142-C210, C174-C189, and C200-C225. Residue H65 is the Charge relay system of the active site. N103 carries an N-linked (GlcNAc...) asparagine glycan. The active-site Charge relay system is the D110. N-linked (GlcNAc...) asparagine glycans are attached at residues N121, N122, N154, and N170. S204 functions as the Charge relay system in the catalytic mechanism. N251 carries N-linked (GlcNAc...) asparagine glycosylation.

It belongs to the peptidase S1 family. Snake venom subfamily. As to quaternary structure, monomer. As to expression, expressed by the venom gland.

It localises to the secreted. In terms of biological role, snake venom serine protease that may act in the hemostasis system of the prey. The sequence is that of Snake venom serine protease KN13 from Trimeresurus stejnegeri (Chinese green tree viper).